Consider the following 155-residue polypeptide: Large ribosomal subunit protein bL9c (155 aa).

Belongs to the bacterial ribosomal protein bL9 family.

It localises to the plastid. Its subcellular location is the chloroplast. In terms of biological role, binds to the 23S rRNA. This Porphyra purpurea (Red seaweed) protein is Large ribosomal subunit protein bL9c.